Here is a 467-residue protein sequence, read N- to C-terminus: Argininosuccinate lyase (467 aa).

This sequence belongs to the lyase 1 family. Argininosuccinate lyase subfamily.

The protein localises to the cytoplasm. The enzyme catalyses 2-(N(omega)-L-arginino)succinate = fumarate + L-arginine. It participates in amino-acid biosynthesis; L-arginine biosynthesis; L-arginine from L-ornithine and carbamoyl phosphate: step 3/3. This is Argininosuccinate lyase from Nitrosococcus oceani (strain ATCC 19707 / BCRC 17464 / JCM 30415 / NCIMB 11848 / C-107).